We begin with the raw amino-acid sequence, 533 residues long: Probable metalloreductase AIM14 (533 aa).

The next 7 helical transmembrane spans lie at 17–37 (IPYG…LIGA), 61–81 (GGSP…PFVH), 102–122 (VLAT…PGYV), 136–156 (SLCL…ALDS), 168–188 (IPNL…LLSV), 198–218 (SFYL…AYHA), and 220–240 (PGVF…YILS). The region spanning 96–213 (LGRLSYVLAT…IIGAWVFVFL (118 aa)) is the Ferric oxidoreductase domain. The region spanning 240–366 (SKTVPARGVE…GGSGLSYALP (127 aa)) is the FAD-binding FR-type domain.

Belongs to the ferric reductase (FRE) family. AIM14 subfamily.

The protein localises to the membrane. Its function is as follows. Probable cell surface metalloreductase. May be involved in iron or copper homeostasis. The protein is Probable metalloreductase AIM14 (AIM14) of Lachancea thermotolerans (strain ATCC 56472 / CBS 6340 / NRRL Y-8284) (Yeast).